The following is a 130-amino-acid chain: Small ribosomal subunit protein uS9 (130 aa).

The protein belongs to the universal ribosomal protein uS9 family.

In Agathobacter rectalis (strain ATCC 33656 / DSM 3377 / JCM 17463 / KCTC 5835 / VPI 0990) (Eubacterium rectale), this protein is Small ribosomal subunit protein uS9.